Reading from the N-terminus, the 239-residue chain is Phosphoribosylaminoimidazole-succinocarboxamide synthase (239 aa).

Belongs to the SAICAR synthetase family.

The enzyme catalyses 5-amino-1-(5-phospho-D-ribosyl)imidazole-4-carboxylate + L-aspartate + ATP = (2S)-2-[5-amino-1-(5-phospho-beta-D-ribosyl)imidazole-4-carboxamido]succinate + ADP + phosphate + 2 H(+). The protein operates within purine metabolism; IMP biosynthesis via de novo pathway; 5-amino-1-(5-phospho-D-ribosyl)imidazole-4-carboxamide from 5-amino-1-(5-phospho-D-ribosyl)imidazole-4-carboxylate: step 1/2. The chain is Phosphoribosylaminoimidazole-succinocarboxamide synthase from Acinetobacter baylyi (strain ATCC 33305 / BD413 / ADP1).